The chain runs to 248 residues: Functional amyloid sbunit FapE (248 aa).

The N-terminal stretch at 1–20 (MNTSRWLTALCLAASMPAYA) is a signal peptide.

Belongs to the FapE family. As to quaternary structure, a minor component of purified amyloid fibrils. Fibrils are resistant to boiling in 2% (weight/vol) SDS and require &gt;90% (vol/vol) formic acid to dissolve.

The protein resides in the fimbrium. The protein localises to the secreted. Functionally, a minor component of the functional amyloid in this bacterium. Upon overexpression of the endogenous six-gene locus (fapA-fapF) in situ, cells form large clumps during liquid growth, make large amounts of biofilm and produce amyloid fibrils. Expression of the 6 gene operon in E.coli strain BL21(DE3) induces flocculation and biofilm formation with copious extracellular fibrils. The protein is Functional amyloid sbunit FapE of Pseudomonas fluorescens.